A 287-amino-acid chain; its full sequence is MDLLLALLPALFWGSIVLFNVKLGGGPYSQTLGTTIGALIVSIVIYFFVQPVLSLRIFIVGIVSGLFWSLGQANQLKSIQLMGVSKTMPISTGMQLVSTSLFGVIVFREWSTPIAITLGVLALIFIIVGIILTSLEDKNDKKEGEPSNLKKGILILLVSTLGYLVYVVVARLFNVSGWSALLPQAIGMVVGGLVLTYRHKPFNKYAIRNILPGLIWAGGNMFLFISQPRVGVATSFSLSQMGIVISTLGGIFILREKKTKRQLIAIAIGIILIIAAAVFLGIAKTNS.

Transmembrane regions (helical) follow at residues 4 to 26 (LLAL…LGGG), 38 to 60 (ALIV…IFIV), 110 to 132 (WSTP…GIIL), 153 to 175 (ILIL…LFNV), 180 to 197 (ALLP…VLTY), 210 to 227 (ILPG…FISQ), 232 to 254 (VATS…IFIL), and 261 to 283 (RQLI…LGIA).

It belongs to the GRP transporter (TC 2.A.7.5) family.

Its subcellular location is the cell membrane. Involved in the uptake of glucose. This chain is Glucose uptake protein GlcU (glcU), found in Bacillus subtilis (strain 168).